A 396-amino-acid polypeptide reads, in one-letter code: MFEHIKAAPADPILGLGEAFKSETRENKINLGIGVYKDAQGTTPIMHAVKEAEKRLFDKEKTKNYLTIDGIADYNEQTKALLFGKDSEVIQSNRARTVQSLGGTGALRIAAEFIKRQTKAQNVWISTPTWPNHNAIFNAVGMTIREYRYYDAERKALDWEHLLEDLSQASEGDVVLLHGCCHNPTGIDPTPEQWQELAALSAKNGWLPLFDFAYQGLANGLDEDAYGLRAFAANHKELLVASSFSKNFGLYNERVGAFTLVAENAEIASTSLTQVKSIIRTLYSNPASHGGATVATVLNDAQLRQEWENELTEMRERIKKMRHLFVQLLKEYGAEQDFSFIIEQNGMFSFSGLTGEQVDRLKNEFAIYAVRSGRINVAGITEDNIRYLCESIVKVL.

Positions 34, 130, and 183 each coordinate L-aspartate. At K246 the chain carries N6-(pyridoxal phosphate)lysine. R374 is an L-aspartate binding site.

Belongs to the class-I pyridoxal-phosphate-dependent aminotransferase family. Homodimer. Pyridoxal 5'-phosphate serves as cofactor.

It localises to the cytoplasm. The enzyme catalyses L-aspartate + 2-oxoglutarate = oxaloacetate + L-glutamate. The polypeptide is Aspartate aminotransferase (aspC) (Haemophilus influenzae (strain ATCC 51907 / DSM 11121 / KW20 / Rd)).